A 224-amino-acid polypeptide reads, in one-letter code: Urease accessory protein UreF (224 aa).

Belongs to the UreF family. UreD, UreF and UreG form a complex that acts as a GTP-hydrolysis-dependent molecular chaperone, activating the urease apoprotein by helping to assemble the nickel containing metallocenter of UreC. The UreE protein probably delivers the nickel.

The protein localises to the cytoplasm. Functionally, required for maturation of urease via the functional incorporation of the urease nickel metallocenter. In Pseudomonas fluorescens (strain Pf0-1), this protein is Urease accessory protein UreF.